We begin with the raw amino-acid sequence, 802 residues long: Neuronal PAS domain-containing protein 4 (802 aa).

The basic motif; degenerate stretch occupies residues 1 to 13 (MYRSTKGASKARR). Residues 1–53 (MYRSTKGASKARRDQINAEIRNLKELLPLAEADKVRLSYLHIMSLACIYTRKG) enclose the bHLH domain. A coiled-coil region spans residues 5–38 (TKGASKARRDQINAEIRNLKELLPLAEADKVRLS). The interval 14–53 (DQINAEIRNLKELLPLAEADKVRLSYLHIMSLACIYTRKG) is helix-loop-helix motif. 2 PAS domains span residues 70–144 (SAQE…LDAD) and 203–275 (PGPG…LAEN). One can recognise a PAC domain in the interval 280–319 (AEMVVRLQAKHGGWTWIYCMLYSDGPEGPITANNYPISDT). 3 stretches are compositionally biased toward polar residues: residues 472 to 495 (PSSA…SSAR), 502 to 518 (TPCT…STAT), and 527 to 555 (THEQ…QLSP). The tract at residues 472-555 (PSSATFPDPL…SQTFPEQLSP (84 aa)) is disordered. A coiled-coil region spans residues 624-648 (YTEKEQNEIDRLIQQISQLAQGMDR).

In terms of assembly, efficient DNA binding requires dimerization with another bHLH protein. Heterodimer; forms a heterodimer with ARNT, ARNT2 or BMAL1. Post-translationally, ubiquitinated, leading to degradation by the proteosome. In terms of tissue distribution, specifically expressed in neurons. Expressed in the lateral nucleus of the amygdala (at protein level).

It localises to the nucleus. In terms of biological role, transcription factor expressed in neurons of the brain that regulates the excitatory-inhibitory balance within neural circuits and is required for contextual memory in the hippocampus. Plays a key role in the structural and functional plasticity of neurons. Acts as an early-response transcription factor in both excitatory and inhibitory neurons, where it induces distinct but overlapping sets of late-response genes in these two types of neurons, allowing the synapses that form on inhibitory and excitatory neurons to be modified by neuronal activity in a manner specific to their function within a circuit, thereby facilitating appropriate circuit responses to sensory experience. In excitatory neurons, activates transcription of BDNF, which in turn controls the number of GABA-releasing synapses that form on excitatory neurons, thereby promoting an increased number of inhibitory synapses on excitatory neurons. In inhibitory neurons, regulates a distinct set of target genes that serve to increase excitatory input onto somatostatin neurons, probably resulting in enhanced feedback inhibition within cortical circuits. The excitatory and inhibitory balance in neurons affects a number of processes, such as short-term and long-term memory, acquisition of experience, fear memory, response to stress and social behavior. Acts as a regulator of dendritic spine development in olfactory bulb granule cells in a sensory-experience-dependent manner by regulating expression of MDM2. Efficient DNA binding requires dimerization with another bHLH protein, such as ARNT, ARNT2 or BMAL1. Can activate the CME (CNS midline enhancer) element. In Rattus norvegicus (Rat), this protein is Neuronal PAS domain-containing protein 4.